The chain runs to 529 residues: Protein PAT1 homolog 2 (529 aa).

The segment at 153-183 (QILQQQQRWRRRRSPTARSVPAQKPWSREPA) is disordered.

The protein belongs to the PAT1 family. As to quaternary structure, interacts with LSM1.

Its subcellular location is the cytoplasm. It is found in the nucleus. RNA-binding protein that acts as a translational repressor. This is Protein PAT1 homolog 2 (Patl2) from Mus musculus (Mouse).